The primary structure comprises 1506 residues: Gag-Pol polyprotein (1506 aa).

2 CCHC-type zinc fingers span residues 385-402 (QKCYNCGKPGHLARQCRQ) and 404-421 (IICHHCGKRGHMQKDCRQ). The 72-residue stretch at 459–530 (KKLLVDTGAD…SPVEVLGRDN (72 aa)) folds into the Peptidase A2 domain. Asp-464 functions as the Protease; shared with dimeric partner in the catalytic mechanism. Residues 587-776 (EGKVGRAPPH…YPAKWLGFEL (190 aa)) form the Reverse transcriptase domain. Positions 652, 727, 728, 980, 1012, 1032, and 1085 each coordinate Mg(2+). Residues 971–1093 (VVPGPTYYTD…IDRYISEIFL (123 aa)) form the RNase H type-1 domain. An Integrase-type zinc finger spans residues 1228–1269 (ENIPLAEEEHNKWHQDAVSLHLEFGIPRTAAEDIVQQCDVCQ). Residues His-1237, His-1241, Cys-1265, and Cys-1268 each contribute to the Zn(2+) site. The 161-residue stretch at 1270 to 1430 (ENKMPSTLRG…SPMDIFIFNK (161 aa)) folds into the Integrase catalytic domain. Positions 1291, 1343, and 1379 each coordinate Mg(2+). A DNA-binding region (integrase-type) is located at residues 1447-1499 (RFCYYRTRKRGHPGEWQGPTQVLWGGDGAIVVKDRGTDRYLVIANKDVKFIPP).

It belongs to the retroviral Pol polyprotein family. In terms of assembly, homotetramer; further associates as a homohexadecamer. It depends on Mg(2+) as a cofactor. In terms of processing, specific enzymatic cleavages by the viral protease yield mature proteins.

It localises to the virion. It carries out the reaction 3'-end directed exonucleolytic cleavage of viral RNA-DNA hybrid.. It catalyses the reaction Endonucleolytic cleavage to 5'-phosphomonoester.. The catalysed reaction is dUTP + H2O = dUMP + diphosphate + H(+). The enzyme catalyses DNA(n) + a 2'-deoxyribonucleoside 5'-triphosphate = DNA(n+1) + diphosphate. Mediates, with Gag polyprotein, the essential events in virion assembly, including binding the plasma membrane, making the protein-protein interactions necessary to create spherical particles, recruiting the viral Env proteins, and packaging the genomic RNA via direct interactions with the RNA packaging sequence. Its function is as follows. Targets the polyprotein to the plasma membrane. Functionally, forms the core that encapsulates the genomic RNA-nucleocapsid complex in the virion. In terms of biological role, encapsulates and protects viral dimeric unspliced genomic RNA (gRNA). Binds these RNAs through its zinc fingers. Acts as a nucleic acid chaperone which is involved in rearrangement of nucleic acid secondary structure during gRNA retrotranscription. Also facilitates template switch leading to recombination. The aspartyl protease mediates proteolytic cleavages of Gag and Gag-Pol polyproteins during or shortly after the release of the virion from the plasma membrane. Cleavages take place as an ordered, step-wise cascade to yield mature proteins. This process is called maturation. Displays maximal activity during the budding process just prior to particle release from the cell. Its function is as follows. RT is a multifunctional enzyme that converts the viral dimeric RNA genome into dsDNA in the cytoplasm, shortly after virus entry into the cell. This enzyme displays a DNA polymerase activity that can copy either DNA or RNA templates, and a ribonuclease H (RNase H) activity that cleaves the RNA strand of RNA-DNA heteroduplexes in a partially processive 3' to 5' endonucleasic mode. Conversion of viral genomic RNA into dsDNA requires many steps. A tRNA binds to the primer-binding site (PBS) situated at the 5' end of the viral RNA. RT uses the 3' end of the tRNA primer to perfom a short round of RNA-dependent minus-strand DNA synthesis. The reading proceeds through the U5 region and ends after the repeated (R) region which is present at both ends of viral RNA. The portion of the RNA-DNA heteroduplex is digested by the RNase H, resulting in a ssDNA product attached to the tRNA primer. This ssDNA/tRNA hybridizes with the identical R region situated at the 3' end of viral RNA. This template exchange, known as minus-strand DNA strong stop transfer, can be either intra- or intermolecular. RT uses the 3' end of this newly synthesized short ssDNA to perfom the RNA-dependent minus-strand DNA synthesis of the whole template. RNase H digests the RNA template except for a polypurine tract (PPT) situated at the 5' end of the genome. It is not clear if both polymerase and RNase H activities are simultaneous. RNase H probably can proceed both in a polymerase-dependent (RNA cut into small fragments by the same RT performing DNA synthesis) and a polymerase-independent mode (cleavage of remaining RNA fragments by free RTs). Secondly, RT performs DNA-directed plus-strand DNA synthesis using the PPT that has not been removed by RNase H as primers. PPT and tRNA primers are then removed by RNase H. The 3' and 5' ssDNA PBS regions hybridize to form a circular dsDNA intermediate. Strand displacement synthesis by RT to the PBS and PPT ends produces a blunt ended, linear dsDNA copy of the viral genome that includes long terminal repeats (LTRs) at both ends. Functionally, catalyzes viral DNA integration into the host chromosome, by performing a series of DNA cutting and joining reactions. The sequence is that of Gag-Pol polyprotein (pol) from Maedi visna virus (strain KV1772) (MVV).